The following is a 69-amino-acid chain: Conotoxin AbVIF (69 aa).

The signal sequence occupies residues 1–17 (VLIIAVLFLTACQLTTA). Positions 18–40 (ETSSRGKQKHRALRSTDKNSRMS) are excised as a propeptide. Residues 20–41 (SSRGKQKHRALRSTDKNSRMSK) form a disordered region. Disulfide bonds link Cys-43–Cys-57, Cys-50–Cys-61, and Cys-56–Cys-68.

Belongs to the conotoxin O1 superfamily. As to expression, expressed by the venom duct.

The protein resides in the secreted. This is Conotoxin AbVIF from Conus abbreviatus (Abbreviated cone).